Here is a 105-residue protein sequence, read N- to C-terminus: Large ribosomal subunit protein uL24 (105 aa).

Belongs to the universal ribosomal protein uL24 family. In terms of assembly, part of the 50S ribosomal subunit.

Functionally, one of two assembly initiator proteins, it binds directly to the 5'-end of the 23S rRNA, where it nucleates assembly of the 50S subunit. Its function is as follows. One of the proteins that surrounds the polypeptide exit tunnel on the outside of the subunit. The chain is Large ribosomal subunit protein uL24 from Nitrosospira multiformis (strain ATCC 25196 / NCIMB 11849 / C 71).